Consider the following 425-residue polypeptide: Adenylosuccinate synthetase (425 aa).

Residues 12–18 (GDEGKGK) and 40–42 (GHT) contribute to the GTP site. D13 acts as the Proton acceptor in catalysis. Residues D13 and G40 each coordinate Mg(2+). IMP contacts are provided by residues 13–16 (DEGK), 38–41 (NAGH), T130, R144, Q224, T239, and R301. The Proton donor role is filled by H41. A substrate-binding site is contributed by 297-303 (TVSNRRR). GTP is bound by residues R303, 329-331 (KLD), and 411-413 (STS).

The protein belongs to the adenylosuccinate synthetase family. Homodimer. The cofactor is Mg(2+).

It localises to the cytoplasm. The catalysed reaction is IMP + L-aspartate + GTP = N(6)-(1,2-dicarboxyethyl)-AMP + GDP + phosphate + 2 H(+). It functions in the pathway purine metabolism; AMP biosynthesis via de novo pathway; AMP from IMP: step 1/2. In terms of biological role, plays an important role in the de novo pathway of purine nucleotide biosynthesis. Catalyzes the first committed step in the biosynthesis of AMP from IMP. The protein is Adenylosuccinate synthetase of Wolbachia pipientis wMel.